We begin with the raw amino-acid sequence, 345 residues long: Solute carrier family 25 member 43 (345 aa).

Solcar repeat units follow at residues 11 to 100 (TSSQ…IDEL), 104 to 195 (SQWR…QERH), and 199 to 297 (TSLQ…LYRN). 6 helical membrane passes run 16-36 (LMCV…LEVV), 67-87 (FWKG…IHLA), 109-129 (IVAG…LEVV), 165-185 (GFSL…AVYI), 204-224 (FING…FETV), and 261-281 (VMAL…YFGL).

The protein belongs to the mitochondrial carrier (TC 2.A.29) family.

The protein localises to the mitochondrion inner membrane. This chain is Solute carrier family 25 member 43 (slc25a43), found in Danio rerio (Zebrafish).